The chain runs to 305 residues: N-acetylmuramic acid 6-phosphate etherase (305 aa).

The interval 1–24 is disordered; the sequence is MTTPPSSPLSDPRRTEGVHPTHTD. The segment covering 11 to 24 has biased composition (basic and acidic residues); that stretch reads DPRRTEGVHPTHTD. An SIS domain is found at 62-225; sequence ALPRLERGGR…SSALMVRLGK (164 aa). Glu-90 acts as the Proton donor in catalysis. Glu-121 is a catalytic residue.

This sequence belongs to the GCKR-like family. MurNAc-6-P etherase subfamily. In terms of assembly, homodimer.

It carries out the reaction N-acetyl-D-muramate 6-phosphate + H2O = N-acetyl-D-glucosamine 6-phosphate + (R)-lactate. The protein operates within amino-sugar metabolism; N-acetylmuramate degradation. Its function is as follows. Specifically catalyzes the cleavage of the D-lactyl ether substituent of MurNAc 6-phosphate, producing GlcNAc 6-phosphate and D-lactate. This Deinococcus geothermalis (strain DSM 11300 / CIP 105573 / AG-3a) protein is N-acetylmuramic acid 6-phosphate etherase.